The following is a 429-amino-acid chain: Adenylosuccinate synthetase (429 aa).

GTP contacts are provided by residues 12–18 and 40–42; these read GDEGKGK and GHT. The Proton acceptor role is filled by D13. The Mg(2+) site is built by D13 and G40. IMP contacts are provided by residues 13-16, 38-41, T129, R143, Q223, T238, and R302; these read DEGK and NAGH. The Proton donor role is filled by H41. Substrate is bound at residue 298 to 304; sequence TVTGRPR. GTP contacts are provided by residues R304, 330–332, and 412–414; these read KLD and STS.

The protein belongs to the adenylosuccinate synthetase family. In terms of assembly, homodimer. Mg(2+) serves as cofactor.

The protein resides in the cytoplasm. It catalyses the reaction IMP + L-aspartate + GTP = N(6)-(1,2-dicarboxyethyl)-AMP + GDP + phosphate + 2 H(+). It participates in purine metabolism; AMP biosynthesis via de novo pathway; AMP from IMP: step 1/2. In terms of biological role, plays an important role in the de novo pathway of purine nucleotide biosynthesis. Catalyzes the first committed step in the biosynthesis of AMP from IMP. In Paramagnetospirillum magneticum (strain ATCC 700264 / AMB-1) (Magnetospirillum magneticum), this protein is Adenylosuccinate synthetase.